The primary structure comprises 310 residues: Ribosomal RNA large subunit methyltransferase F (310 aa).

Belongs to the methyltransferase superfamily. METTL16/RlmF family.

It is found in the cytoplasm. The enzyme catalyses adenosine(1618) in 23S rRNA + S-adenosyl-L-methionine = N(6)-methyladenosine(1618) in 23S rRNA + S-adenosyl-L-homocysteine + H(+). Functionally, specifically methylates the adenine in position 1618 of 23S rRNA. This Psychromonas ingrahamii (strain DSM 17664 / CCUG 51855 / 37) protein is Ribosomal RNA large subunit methyltransferase F.